Consider the following 193-residue polypeptide: Phosphoheptose isomerase (193 aa).

The SIS domain maps to 37-193; sequence LADSFKVGGK…QLIEKEMVKA (157 aa). Position 52–54 (52–54) interacts with substrate; the sequence is NGG. The Zn(2+) site is built by His-61 and Glu-65. Residues Glu-65, 93–94, 119–121, Ser-124, and Gln-172 each bind substrate; these read ND and STS. 2 residues coordinate Zn(2+): Gln-172 and His-180.

The protein belongs to the SIS family. GmhA subfamily. In terms of assembly, homotetramer. Requires Zn(2+) as cofactor.

The protein localises to the cytoplasm. It carries out the reaction 2 D-sedoheptulose 7-phosphate = D-glycero-alpha-D-manno-heptose 7-phosphate + D-glycero-beta-D-manno-heptose 7-phosphate. The protein operates within carbohydrate biosynthesis; D-glycero-D-manno-heptose 7-phosphate biosynthesis; D-glycero-alpha-D-manno-heptose 7-phosphate and D-glycero-beta-D-manno-heptose 7-phosphate from sedoheptulose 7-phosphate: step 1/1. It participates in bacterial outer membrane biogenesis; LPS core biosynthesis. Its function is as follows. Catalyzes the isomerization of sedoheptulose 7-phosphate in D-glycero-D-manno-heptose 7-phosphate. The sequence is that of Phosphoheptose isomerase from Photorhabdus laumondii subsp. laumondii (strain DSM 15139 / CIP 105565 / TT01) (Photorhabdus luminescens subsp. laumondii).